Reading from the N-terminus, the 245-residue chain is Uridylate kinase (245 aa).

12 to 15 (KLSG) lines the ATP pocket. Residues 20 to 25 (GEKGVG) form an involved in allosteric activation by GTP region. Residue Gly-54 participates in UMP binding. Gly-55 and Arg-59 together coordinate ATP. Residues Asp-74 and 135–142 (IGSPYFST) contribute to the UMP site. ATP contacts are provided by Asn-163, Tyr-169, and Asp-172.

Belongs to the UMP kinase family. As to quaternary structure, homohexamer.

Its subcellular location is the cytoplasm. The enzyme catalyses UMP + ATP = UDP + ADP. It functions in the pathway pyrimidine metabolism; CTP biosynthesis via de novo pathway; UDP from UMP (UMPK route): step 1/1. With respect to regulation, allosterically activated by GTP. Inhibited by UTP. Its function is as follows. Catalyzes the reversible phosphorylation of UMP to UDP. The polypeptide is Uridylate kinase (Streptococcus thermophilus (strain ATCC BAA-491 / LMD-9)).